A 324-amino-acid chain; its full sequence is Lipoyl synthase (324 aa).

Positions 72, 77, 83, 98, 102, 105, and 313 each coordinate [4Fe-4S] cluster. The 219-residue stretch at 84-302 folds into the Radical SAM core domain; it reads FRFGTASFMI…AQEGKKMGFL (219 aa).

Belongs to the radical SAM superfamily. Lipoyl synthase family. [4Fe-4S] cluster serves as cofactor.

The protein resides in the cytoplasm. It carries out the reaction [[Fe-S] cluster scaffold protein carrying a second [4Fe-4S](2+) cluster] + N(6)-octanoyl-L-lysyl-[protein] + 2 oxidized [2Fe-2S]-[ferredoxin] + 2 S-adenosyl-L-methionine + 4 H(+) = [[Fe-S] cluster scaffold protein] + N(6)-[(R)-dihydrolipoyl]-L-lysyl-[protein] + 4 Fe(3+) + 2 hydrogen sulfide + 2 5'-deoxyadenosine + 2 L-methionine + 2 reduced [2Fe-2S]-[ferredoxin]. The protein operates within protein modification; protein lipoylation via endogenous pathway; protein N(6)-(lipoyl)lysine from octanoyl-[acyl-carrier-protein]: step 2/2. In terms of biological role, catalyzes the radical-mediated insertion of two sulfur atoms into the C-6 and C-8 positions of the octanoyl moiety bound to the lipoyl domains of lipoate-dependent enzymes, thereby converting the octanoylated domains into lipoylated derivatives. The protein is Lipoyl synthase of Dichelobacter nodosus (strain VCS1703A).